Here is a 428-residue protein sequence, read N- to C-terminus: Histidine--tRNA ligase (428 aa).

It belongs to the class-II aminoacyl-tRNA synthetase family. As to quaternary structure, homodimer.

It is found in the cytoplasm. It carries out the reaction tRNA(His) + L-histidine + ATP = L-histidyl-tRNA(His) + AMP + diphosphate + H(+). This is Histidine--tRNA ligase from Lactobacillus delbrueckii subsp. bulgaricus (strain ATCC 11842 / DSM 20081 / BCRC 10696 / JCM 1002 / NBRC 13953 / NCIMB 11778 / NCTC 12712 / WDCM 00102 / Lb 14).